A 372-amino-acid chain; its full sequence is tRNA pseudouridine synthase D (372 aa).

Catalysis depends on Asp85, which acts as the Nucleophile. One can recognise a TRUD domain in the interval 160-330; that stretch reads GFTNYFGYQR…MQGSRRFMWG (171 aa).

It belongs to the pseudouridine synthase TruD family.

The catalysed reaction is uridine(13) in tRNA = pseudouridine(13) in tRNA. Functionally, responsible for synthesis of pseudouridine from uracil-13 in transfer RNAs. In Campylobacter jejuni subsp. jejuni serotype O:23/36 (strain 81-176), this protein is tRNA pseudouridine synthase D.